The chain runs to 103 residues: ESAT-6-like protein EsxF (103 aa).

This sequence belongs to the WXG100 family. CFP-10 subfamily.

It is found in the secreted. In Mycobacterium tuberculosis (strain CDC 1551 / Oshkosh), this protein is ESAT-6-like protein EsxF.